A 151-amino-acid polypeptide reads, in one-letter code: Macrodomain Ter protein (151 aa).

This sequence belongs to the MatP family. Homodimer.

It is found in the cytoplasm. Its function is as follows. Required for spatial organization of the terminus region of the chromosome (Ter macrodomain) during the cell cycle. Prevents early segregation of duplicated Ter macrodomains during cell division. Binds specifically to matS, which is a 13 bp signature motif repeated within the Ter macrodomain. This chain is Macrodomain Ter protein, found in Yersinia pseudotuberculosis serotype IB (strain PB1/+).